Here is a 207-residue protein sequence, read N- to C-terminus: ATP-dependent Clp protease proteolytic subunit 1 (207 aa).

Catalysis depends on Ser103, which acts as the Nucleophile. His128 is a catalytic residue.

It belongs to the peptidase S14 family. In terms of assembly, fourteen ClpP subunits assemble into 2 heptameric rings which stack back to back to give a disk-like structure with a central cavity, resembling the structure of eukaryotic proteasomes.

Its subcellular location is the cytoplasm. The catalysed reaction is Hydrolysis of proteins to small peptides in the presence of ATP and magnesium. alpha-casein is the usual test substrate. In the absence of ATP, only oligopeptides shorter than five residues are hydrolyzed (such as succinyl-Leu-Tyr-|-NHMec, and Leu-Tyr-Leu-|-Tyr-Trp, in which cleavage of the -Tyr-|-Leu- and -Tyr-|-Trp bonds also occurs).. Cleaves peptides in various proteins in a process that requires ATP hydrolysis. Has a chymotrypsin-like activity. Plays a major role in the degradation of misfolded proteins. This is ATP-dependent Clp protease proteolytic subunit 1 from Tropheryma whipplei (strain Twist) (Whipple's bacillus).